A 225-amino-acid polypeptide reads, in one-letter code: Putative ankyrin repeat protein RBE_1025 (225 aa).

ANK repeat units lie at residues 6–35 (LSKD…AINP), 41–71 (NGKT…NVNI), 75–120 (TGFT…DVNI), and 124–153 (KGNT…SPFI).

This Rickettsia bellii (strain RML369-C) protein is Putative ankyrin repeat protein RBE_1025.